Consider the following 36-residue polypeptide: Kappa-actitoxin-Avd6a (36 aa).

A ShKT domain is found at 2 to 36 (CKDNFAAATCKHVKENKNCGSQKYATNCAKTCGKC). 3 disulfides stabilise this stretch: C2–C36, C11–C29, and C20–C33. Positions 24–25 (KY) are crucial for binding to potassium channels.

It belongs to the sea anemone type 1 potassium channel toxin family. Type 1b subfamily.

It localises to the secreted. The protein localises to the nematocyst. Blocks voltage-gated potassium channels Kv1.2/KCNA2 (IC(50)=140 nM). This chain is Kappa-actitoxin-Avd6a, found in Anemonia sulcata (Mediterranean snakelocks sea anemone).